A 123-amino-acid polypeptide reads, in one-letter code: Large ribosomal subunit protein uL29 (123 aa).

This sequence belongs to the universal ribosomal protein uL29 family.

The protein is Large ribosomal subunit protein uL29 (RPL35) of Euphorbia esula (Leafy spurge).